The primary structure comprises 43 residues: Protein PsbN (43 aa).

The chain crosses the membrane as a helical span at residues 5 to 27 (TLVTIFISGSLVSFTGYALYTAF).

It belongs to the PsbN family.

The protein resides in the plastid. It localises to the chloroplast thylakoid membrane. Functionally, may play a role in photosystem I and II biogenesis. This is Protein PsbN from Piper cenocladum (Ant piper).